A 335-amino-acid polypeptide reads, in one-letter code: Vitamin B12 import system permease protein BtuC (335 aa).

Transmembrane regions (helical) follow at residues 25–45, 67–87, 94–113, 117–139, 153–173, 243–263, 281–301, and 309–329; these read LVVM…VWIW, MAVI…QALF, PGLL…AVLL, LLPI…SILL, LLVG…AVYF, VLAI…ISFI, RLLA…DVVA, and ELPI…WLLI.

This sequence belongs to the binding-protein-dependent transport system permease family. FecCD subfamily. As to quaternary structure, the complex is composed of two ATP-binding proteins (BtuD), two transmembrane proteins (BtuC) and a solute-binding protein (BtuF).

The protein resides in the cell inner membrane. In terms of biological role, part of the ABC transporter complex BtuCDF involved in vitamin B12 import. Involved in the translocation of the substrate across the membrane. This chain is Vitamin B12 import system permease protein BtuC, found in Yersinia pseudotuberculosis serotype O:1b (strain IP 31758).